A 55-amino-acid chain; its full sequence is Large ribosomal subunit protein bL33 (55 aa).

Belongs to the bacterial ribosomal protein bL33 family.

The polypeptide is Large ribosomal subunit protein bL33 (Rhodopseudomonas palustris (strain HaA2)).